We begin with the raw amino-acid sequence, 610 residues long: Putative sensor histidine kinase NtrY-like (610 aa).

Helical transmembrane passes span 18–38 (IGIL…TISI), 49–69 (KVIW…ILLT), 92–112 (IVVA…ISSA), and 292–312 (IIFI…GVIV). Residues 314–368 (AKIVNPIKKLVIATDKVKSGDLTVQVPENEVDKDEIGTLYAAFNRMIKQLSRQQR) form the HAMP domain. The Histidine kinase domain maps to 385 to 596 (KVAHEIKNPL…VIDIRFNLEE (212 aa)). The residue at position 388 (histidine 388) is a Phosphohistidine; by autocatalysis.

The protein resides in the cell membrane. It catalyses the reaction ATP + protein L-histidine = ADP + protein N-phospho-L-histidine.. Its function is as follows. Member of the two-component regulatory system RBE_0470/RBE_0312. In Rickettsia bellii (strain RML369-C), this protein is Putative sensor histidine kinase NtrY-like.